We begin with the raw amino-acid sequence, 392 residues long: L-rhamnonate dehydratase (392 aa).

Substrate contacts are provided by H22 and R48. The Mg(2+) site is built by D214, E240, and E268. H318 (proton acceptor) is an active-site residue. E338 lines the substrate pocket.

This sequence belongs to the mandelate racemase/muconate lactonizing enzyme family. RhamD subfamily. In terms of assembly, homooctamer; tetramer of dimers. It depends on Mg(2+) as a cofactor.

The enzyme catalyses L-rhamnonate = 2-dehydro-3-deoxy-L-rhamnonate + H2O. Catalyzes the dehydration of L-rhamnonate to 2-keto-3-deoxy-L-rhamnonate (KDR). This is L-rhamnonate dehydratase from Burkholderia ambifaria (strain ATCC BAA-244 / DSM 16087 / CCUG 44356 / LMG 19182 / AMMD) (Burkholderia cepacia (strain AMMD)).